Reading from the N-terminus, the 292-residue chain is Syntaxin-19 (292 aa).

Residues 1–24 (MKDRLPELKQRTKETELSKDKDVP) show a composition bias toward basic and acidic residues. The disordered stretch occupies residues 1 to 28 (MKDRLPELKQRTKETELSKDKDVPTTEA). Residues 46 to 122 (VAERHLHEIQ…VKEVKKSEDE (77 aa)) are a coiled coil. Residues 209–271 (LSEIEQRHKE…NTTKEKFGLA (63 aa)) enclose the t-SNARE coiled-coil homology domain.

The protein belongs to the syntaxin family. Interacts with EGFR.

It is found in the cell membrane. Its subcellular location is the cytoplasm. Functionally, plays a role in endosomal trafficking of the epidermal growth factor receptor (EGFR). This chain is Syntaxin-19 (STX19), found in Bos taurus (Bovine).